Consider the following 660-residue polypeptide: MPPGGSGQGGCPRRPPALAGPLPPPPPPPPLPLLLGLLLLLGAAEGARVSSSLSTTHHVHHFHSKHGTVPIAINRMPFLTRSGHAGTTYIFGKGGALITYTWPPNDRPSTRMDRLAVGFSTHQRSAVLVRVDSASGLGDYLQLHIDQGTVGVIFNVGTDDITIDEPNAIVSDGKYHVVRFTRSGGNATLQVDSWPVNERYPAGNFDNERLAIARQRIPYRLGRVVDEWLLDKGRQLTIFNSQAAIKIGGRDQGRPFQGQVSGLYYNGLKVLALAAESDPNVRTEGHLRLVGEGPSVLLSAETTATTLLADMATTIMETTTTMATTTTRRGRSPTMRDSTTQNTDDLLVASAECPSDDEDLEECEPSTGGELILPIITEDSLDPPPVATRSPFVPPPPTFYPFLTGVGATQDTLPPPAARRPSSGGPCQAERDDSDCEEPVEASGFASGEVFDSSLPPTDDEDFYTTFPLVTDRTTLLSPRKPRPNLRTDGATGAPGVLFAPSAPAPNLPAGKMNHRDPLQPLLENPPLGPGVPTAFEPRRPPPLRPGVTSAPGFPRLPTANPTGPGERGPPGAVEVIRESSSTTGMVVGIVAAAALCILILLYAMYKYRNRDEGSYQVDQSRNYISNSAQSNGAVVKEKAPAAPKTPSKAKKNKDKEYYV.

Residues 1–10 (MPPGGSGQGG) are compositionally biased toward gly residues. Residues 1–27 (MPPGGSGQGGCPRRPPALAGPLPPPPP) are disordered. The first 46 residues, 1–46 (MPPGGSGQGGCPRRPPALAGPLPPPPPPPPLPLLLGLLLLLGAAEG), serve as a signal peptide directing secretion. Residues 47–584 (ARVSSSLSTT…EVIRESSSTT (538 aa)) lie on the Extracellular side of the membrane. The region spanning 87–295 (TTYIFGKGGA…HLRLVGEGPS (209 aa)) is the Laminin G-like domain. Residues Asp-139 and Val-156 each contribute to the Ca(2+) site. The N-linked (GlcNAc...) asparagine glycan is linked to Asn-186. The Ca(2+) site is built by Ile-238 and Asn-240. The O-linked (Xyl...) (heparan sulfate) serine glycan is linked to Ser-350. Disordered regions lie at residues 408 to 458 (ATQD…LPPT) and 537 to 571 (EPRR…RGPP). Asn-561 is a glycosylation site (N-linked (GlcNAc...) asparagine). A helical transmembrane segment spans residues 585 to 605 (GMVVGIVAAAALCILILLYAM). Residues 606–660 (YKYRNRDEGSYQVDQSRNYISNSAQSNGAVVKEKAPAAPKTPSKAKKNKDKEYYV) lie on the Cytoplasmic side of the membrane. Residues 627–660 (NSAQSNGAVVKEKAPAAPKTPSKAKKNKDKEYYV) form a disordered region.

It belongs to the neurexin family. As to quaternary structure, interacts (via cytoplasmic C-terminal region) with CASK. Specific isoforms bind alpha-dystroglycan and neuroligins NLGN1, NLGN2 and NLGN3. Interacts with CBLN1, CBLN2 and, less avidly, with CBLN4. Interacts with CLSTN3. O-glycosylated; contains heparan sulfate. Heparan sulfate attachment is required for synapse development by mediating interactions with neuroligins.

The protein localises to the presynaptic cell membrane. Neuronal cell surface protein that may be involved in cell recognition and cell adhesion. The protein is Neurexin-2-beta of Mus musculus (Mouse).